Consider the following 190-residue polypeptide: Probable nicotinate-nucleotide adenylyltransferase (190 aa).

Belongs to the NadD family.

It carries out the reaction nicotinate beta-D-ribonucleotide + ATP + H(+) = deamido-NAD(+) + diphosphate. It participates in cofactor biosynthesis; NAD(+) biosynthesis; deamido-NAD(+) from nicotinate D-ribonucleotide: step 1/1. Functionally, catalyzes the reversible adenylation of nicotinate mononucleotide (NaMN) to nicotinic acid adenine dinucleotide (NaAD). The polypeptide is Probable nicotinate-nucleotide adenylyltransferase (Staphylococcus saprophyticus subsp. saprophyticus (strain ATCC 15305 / DSM 20229 / NCIMB 8711 / NCTC 7292 / S-41)).